We begin with the raw amino-acid sequence, 197 residues long: GTP cyclohydrolase-2 (197 aa).

49–53 (RVHSE) serves as a coordination point for GTP. Cys54, Cys65, and Cys67 together coordinate Zn(2+). GTP-binding positions include Gln70, 92–94 (EGR), and Thr114. The Proton acceptor role is filled by Asp126. The active-site Nucleophile is Arg128. Residues Thr149 and Lys154 each contribute to the GTP site.

It belongs to the GTP cyclohydrolase II family. Homodimer. The cofactor is Zn(2+).

The catalysed reaction is GTP + 4 H2O = 2,5-diamino-6-hydroxy-4-(5-phosphoribosylamino)-pyrimidine + formate + 2 phosphate + 3 H(+). It functions in the pathway cofactor biosynthesis; riboflavin biosynthesis; 5-amino-6-(D-ribitylamino)uracil from GTP: step 1/4. Catalyzes the conversion of GTP to 2,5-diamino-6-ribosylamino-4(3H)-pyrimidinone 5'-phosphate (DARP), formate and pyrophosphate. The chain is GTP cyclohydrolase-2 from Cronobacter sakazakii (strain ATCC BAA-894) (Enterobacter sakazakii).